Here is a 162-residue protein sequence, read N- to C-terminus: Cyanate hydratase (162 aa).

Active-site residues include Arg-102, Glu-105, and Ser-128.

The protein belongs to the cyanase family.

It carries out the reaction cyanate + hydrogencarbonate + 3 H(+) = NH4(+) + 2 CO2. Functionally, catalyzes the reaction of cyanate with bicarbonate to produce ammonia and carbon dioxide. The protein is Cyanate hydratase of Mycosarcoma maydis (Corn smut fungus).